Here is a 161-residue protein sequence, read N- to C-terminus: V-type proton ATPase 16 kDa proteolipid subunit c 2 (161 aa).

Residues 1-15 (MSYDLETAERAAYAP) lie on the Lumenal side of the membrane. The chain crosses the membrane as a helical span at residues 16-36 (FFGYMGAASAQIFTVLGAAYG). Over 37–58 (TAKSAVGICSMGVMRPELIMKS) the chain is Cytoplasmic. A helical membrane pass occupies residues 59–79 (VIPVIMAGIIGIYGLVVAMVL). The Lumenal portion of the chain corresponds to 80–98 (KGKVTSASAGYDLNKGFAH). Residues 99–119 (LAAGLTCGLCGLGAGYAIGIV) traverse the membrane as a helical segment. Over 120–137 (GDAGVRGTAQQPRLFVGM) the chain is Cytoplasmic. The chain crosses the membrane as a helical span at residues 138 to 158 (ILILIFSEVLGLYGMIVALIL). Residues 159-161 (GTS) are Lumenal-facing.

Belongs to the V-ATPase proteolipid subunit family. As to quaternary structure, V-ATPase is a heteromultimeric enzyme made up of two complexes: the ATP-hydrolytic V1 complex and the proton translocation V0 complex. The V1 complex consists of three catalytic AB heterodimers that form a heterohexamer, three peripheral stalks each consisting of EG heterodimers, one central rotor including subunits D and F, and the regulatory subunits C and H. The proton translocation complex V0 consists of the proton transport subunit a, a ring of proteolipid subunits c9c'', rotary subunit d, subunits e and f, and the accessory subunits vah-19/Ac45 and vah-20/PRR. As to expression, expressed in the H-shaped excretory cell, rectum, and a pair of cells posterior to the anus.

Its subcellular location is the membrane. In terms of biological role, proton-conducting pore forming subunit of the V0 complex of vacuolar(H+)-ATPase (V-ATPase), a multisubunit enzyme composed of a peripheral complex (V1) that hydrolyzes ATP and a membrane integral complex (V0) that translocates protons. V-ATPase is responsible for acidifying and maintaining the pH of intracellular compartments and in some cell types, is targeted to the plasma membrane, where it is responsible for acidifying the extracellular environment. Involved in necrotic cell death. Required along with other vacuolar ATPase components for the removal of protein aggregates which form in immature oocytes in the distal gonad. This removal occurs as the oocytes mature and move to the proximal gonad, is triggered by the introduction of sperm through mating and occurs before fertilization. The introduction of sperm triggers V-ATPase accumulation in proximal oocytes and induces lysosomal acidification which leads to engulfing of protein aggregates by lysosomes and subsequent clearance of the aggregates. Lysosomal acidification also leads to changes in mitochondrial morphology and function. Mitochondria in distal immature oocytes are fragmented, produce high levels of reactive oxygen species (ROS) and have high membrane potential, indicative of metabolic inactivity. In contrast, mitochondria in proximal mature oocytes are tubular with lower ROS levels and membrane potential, indicative of an active metabolic state required for aggregate mobilization before clearance. In Caenorhabditis elegans, this protein is V-type proton ATPase 16 kDa proteolipid subunit c 2.